The primary structure comprises 397 residues: MLKTFNSSARSCRAMPRFLPTLCSRLHEKSGFEIRNAVRMHSVGSHTHTHDHGSDKEMLELVKALKKEGKSPELKLAWLGLYSNIGLAAAKGIGGVALQSSILVADAAHQLGDTLSDLVTLATLKICSKKPTQKYPAGFGKWETIGTFTVSGLLVAVSVGIAHSSLSRLYTILFPYAGSEHTHIGHSHNPSQLLFEHPFMALGLIFGSVVLKEWLFRKTRTVAQKTDSNILLANAWHHRADALTGMVSLLALSGTYFLNAPWLDPFFGCLVSIVVFSAGFNSSKKAFLQLLDRAPSEELRIAVTDALLKGEKLPYKIVTILGNAHAMHVIISVPPSFTSQQSSELAQKVEKTVLDAIPALSSCIVTPLSSDSNQVHRWQHLNGSSGEHSHPSHEHTH.

Transmembrane regions (helical) follow at residues 142-162 (WETI…VGIA), 191-211 (SQLL…SVVL), 242-258 (ALTG…TYFL), and 260-280 (APWL…SAGF).

The protein belongs to the cation diffusion facilitator (CDF) transporter (TC 2.A.4) family. SLC30A subfamily.

The protein localises to the membrane. This is an uncharacterized protein from Schizosaccharomyces pombe (strain 972 / ATCC 24843) (Fission yeast).